Reading from the N-terminus, the 258-residue chain is uncharacterized protein (258 aa).

Residues 16 to 148 enclose the Cyclin N-terminal domain; that stretch reads EAFDSFEYAE…VLRALNFDTH (133 aa).

Belongs to the cyclin family. Cyclin L subfamily.

It localises to the cytoplasm. Its subcellular location is the nucleus. This is an uncharacterized protein from Schizosaccharomyces pombe (strain 972 / ATCC 24843) (Fission yeast).